A 382-amino-acid chain; its full sequence is V-type proton ATPase subunit C 1 (382 aa).

Position 2 is an N-acetylthreonine (threonine 2).

It belongs to the V-ATPase C subunit family. As to quaternary structure, V-ATPase is a heteromultimeric enzyme made up of two complexes: the ATP-hydrolytic V1 complex and the proton translocation V0 complex. The V1 complex consists of three catalytic AB heterodimers that form a heterohexamer, three peripheral stalks each consisting of EG heterodimers, one central rotor including subunits D and F, and the regulatory subunits C and H. The proton translocation complex V0 consists of the proton transport subunit a, a ring of proteolipid subunits c9c'', rotary subunit d, subunits e and f, and two accessory subunits.

Its function is as follows. Subunit of the V1 complex of vacuolar(H+)-ATPase (V-ATPase), a multisubunit enzyme composed of a peripheral complex (V1) that hydrolyzes ATP and a membrane integral complex (V0) that translocates protons. V-ATPase is responsible for acidifying and maintaining the pH of intracellular compartments and in some cell types, is targeted to the plasma membrane, where it is responsible for acidifying the extracellular environment. Subunit C is necessary for the assembly of the catalytic sector of the enzyme and is likely to have a specific function in its catalytic activity. In Xenopus laevis (African clawed frog), this protein is V-type proton ATPase subunit C 1 (atp6v1c1).